A 178-amino-acid polypeptide reads, in one-letter code: Large ribosomal subunit protein uL10 (178 aa).

Belongs to the universal ribosomal protein uL10 family. In terms of assembly, part of the ribosomal stalk of the 50S ribosomal subunit. The N-terminus interacts with L11 and the large rRNA to form the base of the stalk. The C-terminus forms an elongated spine to which L12 dimers bind in a sequential fashion forming a multimeric L10(L12)X complex.

Forms part of the ribosomal stalk, playing a central role in the interaction of the ribosome with GTP-bound translation factors. The sequence is that of Large ribosomal subunit protein uL10 from Dictyoglomus turgidum (strain DSM 6724 / Z-1310).